The following is a 179-amino-acid chain: Probable RNA 2'-phosphotransferase (179 aa).

The protein belongs to the KptA/TPT1 family.

Functionally, removes the 2'-phosphate from RNA via an intermediate in which the phosphate is ADP-ribosylated by NAD followed by a presumed transesterification to release the RNA and generate ADP-ribose 1''-2''-cyclic phosphate (APPR&gt;P). May function as an ADP-ribosylase. The polypeptide is Probable RNA 2'-phosphotransferase (Fusobacterium nucleatum subsp. nucleatum (strain ATCC 25586 / DSM 15643 / BCRC 10681 / CIP 101130 / JCM 8532 / KCTC 2640 / LMG 13131 / VPI 4355)).